The sequence spans 1418 residues: MRPFLDDAKRRVDRKLSASRQSLSTSRLLPSALPDRLKDNHDAQVDFTAPPGGSGSREGHLQYMQQSIFGMIAAVGSRSDFHARFDESSDSDGESEQRPRKESSVRKGTSASANTSSPLDSSQRSSSRTDGKSEKESGTRGRRHPRTISDHKLFRPFESNSKHEPQTDPSTGDEMPNISPPTRPRSATPRAAPILSRMVEAQAQFDLKASSTERSQPSLDESGEKGPRGASVSPLSTRLMDMFGFDKPEKVLVEYACSLLQSILLQGYMYVTEGHICFYAYLPKKSTVAIKSGYLYKRGRKNPKYSRYWFSLKGDVLSYYADPSNLYFPSGHVDLRYGISASLGEAKEKGREPRDFQVTTDQRTYYFRADSSMSAKEWVKALQKVIFRTHNEGESVKISFPIESIIDIEESPMVDFAETFKIRVIEDDDSYAIDEYFFTFFNSGREAFEFLRSLINDQSLKISSQHLSPQPDRSPRSDPTRKSRNRWSLTSGTSRVLGNSRAETQRKASASTSHTSLAHDVIKSSPATRHQDSSESILNSFEQGTESSAAWQSMTDAAESASQILNRSDVFQSPTIHGLDRRPSGGERRGRRNSDETARSLSTRANVGTGQQIDELGRRMDGDTSGREARDSTGESDQYTQDPTKSFSGAPSLNELVKAGVYPLQRAAGLAEYLRTRSKQMSNLLASESMGYIEKVSGMWTGGRKHYGEAEDVLPDDQDVDPEDKEDGCNYGDRFRAHFALPRTEKLQATYFAYLHRVLPLYGKIYVSQKKLCFRSLIPGTRTKMILPLRDIENVEKEKGFRFGYHGLVIIIRGHEELFFEFRTSDARDDCAVTLHQHLEAVKFMAESGLLAEQEQNDSEAAMTEHRMLQEARYDDYGENDLRPLNESSELHPIFDDPRASIVNFKPAESLRITCLTIGSRGDVQPYIALCKGLLAEGHRPKIATHAEFEPWVRKHGIDFAPVEGDPAELMRICVENGMFTYSFLKEASQKFRGWIDDLLSSAWASCQDSDLLIESPSAMAGIHIAEALRIPYFRAFTMPWSRTRAYPHAFAVPEHRMGGAYNYITYVMFDNVFWKAIAGQVNRWRKNELGLKATTLDKMQPNKVPFLYNYSPSVVPPPLDYPDWIRITGYWFLNEGSDWTPPTALCEFIHRAREDGKKIVYIGFGSIVVSDPSALTKTVIESVRKADVRCILSKGWSDRLGDPASAKPEVPLPPEIHQIQAAPHDWLFSHIDAAVHHGGAGTTGASLRAGVPTIIKPFFGDQFFFGSRVEDLGVGICMKKLNVSVFSRALWEATHSERMIIRAQDLGARIRSEDGVATAIQAIYRDLEYAKTLARQRSIASSTPFSPTPSAKTTAEQDADDDVEDSEEWTFVGDDTDMEMSRRLRDRAISDADMLPDRLLANSVPGDSGPGRKLSGR.

A compositionally biased stretch (basic and acidic residues) spans 1–16 (MRPFLDDAKRRVDRKL). Disordered regions lie at residues 1–59 (MRPF…SREG), 83–188 (ARFD…RSAT), and 207–233 (LKAS…ASVS). Positions 18 to 28 (ASRQSLSTSRL) are enriched in polar residues. 2 stretches are compositionally biased toward basic and acidic residues: residues 35-44 (DRLKDNHDAQ) and 95-105 (SEQRPRKESSV). Residues 106–115 (RKGTSASANT) are compositionally biased toward polar residues. Positions 116–126 (SSPLDSSQRSS) are enriched in low complexity. Composition is skewed to basic and acidic residues over residues 127-139 (SRTD…ESGT) and 147-166 (TISD…HEPQ). Positions 209–219 (ASSTERSQPSL) are enriched in polar residues. In terms of domain architecture, GRAM 1 spans 249 to 288 (EKVLVEYACSLLQSILLQGYMYVTEGHICFYAYLPKKSTV). The PH domain occupies 289-387 (AIKSGYLYKR…WVKALQKVIF (99 aa)). Positions 462-651 (ISSQHLSPQP…DPTKSFSGAP (190 aa)) are disordered. Residues 486–497 (RWSLTSGTSRVL) show a composition bias toward polar residues. Low complexity predominate over residues 508 to 519 (ASASTSHTSLAH). The span at 534 to 575 (SESILNSFEQGTESSAAWQSMTDAAESASQILNRSDVFQSPT) shows a compositional bias: polar residues. Positions 578 to 598 (GLDRRPSGGERRGRRNSDETA) are enriched in basic and acidic residues. A compositionally biased stretch (polar residues) spans 599-612 (RSLSTRANVGTGQQ). Residues 615–633 (ELGRRMDGDTSGREARDST) show a composition bias toward basic and acidic residues. Residues 635–651 (ESDQYTQDPTKSFSGAP) are compositionally biased toward polar residues. The region spanning 733–799 (DRFRAHFALP…RDIENVEKEK (67 aa)) is the GRAM 2 domain. Residues serine 920, arginine 921, aspartate 923, alanine 1223, histidine 1225, histidine 1238, glycine 1242, threonine 1243, aspartate 1262, and glutamine 1263 each contribute to the UDP-alpha-D-glucose site. The segment at 1339-1418 (SIASSTPFSP…SGPGRKLSGR (80 aa)) is disordered. The segment covering 1341-1355 (ASSTPFSPTPSAKTT) has biased composition (low complexity). Residues 1358-1379 (QDADDDVEDSEEWTFVGDDTDM) are compositionally biased toward acidic residues. Positions 1380 to 1391 (EMSRRLRDRAIS) are enriched in basic and acidic residues.

Belongs to the glycosyltransferase 28 family.

The protein localises to the cytoplasm. It is found in the preautophagosomal structure membrane. The catalysed reaction is a sterol + UDP-alpha-D-glucose = a sterol 3-beta-D-glucoside + UDP + H(+). It carries out the reaction ergosterol + UDP-alpha-D-glucose = ergosteryl 3-beta-D-glucoside + UDP + H(+). Sterol glycosyltransferase responsible for the glycosylation of ergosterol to form ergosterol-glucoside. The sequence is that of Sterol 3-beta-glucosyltransferase from Neosartorya fischeri (strain ATCC 1020 / DSM 3700 / CBS 544.65 / FGSC A1164 / JCM 1740 / NRRL 181 / WB 181) (Aspergillus fischerianus).